The chain runs to 336 residues: Homoserine O-acetyltransferase (336 aa).

One can recognise an AB hydrolase-1 domain in the interval 58–321; that stretch reads AILVLHALTG…PHGHDAFLID (264 aa). Ser147 serves as the catalytic Nucleophile. Arg204 serves as a coordination point for substrate. Catalysis depends on residues Asp286 and His315. Asp316 is a substrate binding site.

Belongs to the AB hydrolase superfamily. MetX family. Homodimer.

It is found in the cytoplasm. It carries out the reaction L-homoserine + acetyl-CoA = O-acetyl-L-homoserine + CoA. It participates in amino-acid biosynthesis; L-methionine biosynthesis via de novo pathway; O-acetyl-L-homoserine from L-homoserine: step 1/1. Its function is as follows. Transfers an acetyl group from acetyl-CoA to L-homoserine, forming acetyl-L-homoserine. The protein is Homoserine O-acetyltransferase of Deinococcus geothermalis (strain DSM 11300 / CIP 105573 / AG-3a).